Consider the following 320-residue polypeptide: Cytochrome f (320 aa).

An N-terminal signal peptide occupies residues 1-35 (MQNRNTFSWVKEQMTRFISVSIMIYVITRTSIANA). Heme-binding residues include Y36, C56, C59, and H60. A helical transmembrane segment spans residues 286 to 306 (VQGLLFFLASVILAQIFLVLK).

The protein belongs to the cytochrome f family. In terms of assembly, the 4 large subunits of the cytochrome b6-f complex are cytochrome b6, subunit IV (17 kDa polypeptide, petD), cytochrome f and the Rieske protein, while the 4 small subunits are PetG, PetL, PetM and PetN. The complex functions as a dimer. It depends on heme as a cofactor.

It is found in the plastid. The protein resides in the chloroplast thylakoid membrane. In terms of biological role, component of the cytochrome b6-f complex, which mediates electron transfer between photosystem II (PSII) and photosystem I (PSI), cyclic electron flow around PSI, and state transitions. The polypeptide is Cytochrome f (Acorus calamus (Sweet flag)).